We begin with the raw amino-acid sequence, 341 residues long: Ketol-acid reductoisomerase (NADP(+)) (341 aa).

The 182-residue stretch at 1–182 (MTELFYDDDA…GGTRAGVIKT (182 aa)) folds into the KARI N-terminal Rossmann domain. NADP(+) is bound by residues 25 to 28 (YGSQ), serine 51, serine 53, and 83 to 86 (DQVQ). The active site involves histidine 108. NADP(+) is bound at residue glycine 134. The KARI C-terminal knotted domain maps to 183–328 (TFTEETETDL…RELRKLFSWI (146 aa)). The Mg(2+) site is built by aspartate 191, glutamate 195, glutamate 227, and glutamate 231. Serine 252 is a substrate binding site.

This sequence belongs to the ketol-acid reductoisomerase family. Mg(2+) serves as cofactor.

The enzyme catalyses (2R)-2,3-dihydroxy-3-methylbutanoate + NADP(+) = (2S)-2-acetolactate + NADPH + H(+). The catalysed reaction is (2R,3R)-2,3-dihydroxy-3-methylpentanoate + NADP(+) = (S)-2-ethyl-2-hydroxy-3-oxobutanoate + NADPH + H(+). It functions in the pathway amino-acid biosynthesis; L-isoleucine biosynthesis; L-isoleucine from 2-oxobutanoate: step 2/4. It participates in amino-acid biosynthesis; L-valine biosynthesis; L-valine from pyruvate: step 2/4. Involved in the biosynthesis of branched-chain amino acids (BCAA). Catalyzes an alkyl-migration followed by a ketol-acid reduction of (S)-2-acetolactate (S2AL) to yield (R)-2,3-dihydroxy-isovalerate. In the isomerase reaction, S2AL is rearranged via a Mg-dependent methyl migration to produce 3-hydroxy-3-methyl-2-ketobutyrate (HMKB). In the reductase reaction, this 2-ketoacid undergoes a metal-dependent reduction by NADPH to yield (R)-2,3-dihydroxy-isovalerate. This chain is Ketol-acid reductoisomerase (NADP(+)), found in Renibacterium salmoninarum (strain ATCC 33209 / DSM 20767 / JCM 11484 / NBRC 15589 / NCIMB 2235).